We begin with the raw amino-acid sequence, 226 residues long: PKHD-type hydroxylase Sfri_0612 (226 aa).

The Fe2OG dioxygenase domain maps to 77–177; sequence KIFPPCFNRY…RIAAITWMQS (101 aa). 3 residues coordinate Fe cation: His-95, Asp-97, and His-158. Position 168 (Arg-168) interacts with 2-oxoglutarate.

Fe(2+) serves as cofactor. L-ascorbate is required as a cofactor.

This is PKHD-type hydroxylase Sfri_0612 from Shewanella frigidimarina (strain NCIMB 400).